The sequence spans 639 residues: 3-oxocholoyl-CoA 4-desaturase (639 aa).

Gln101 is a binding site for FMN. 155–158 (HAAH) contributes to the substrate binding site. Tyr160 serves as the catalytic Proton donor. Residues Arg208, Arg286, and 308–309 (GR) contribute to the FMN site. Positions 332 and 335 each coordinate [4Fe-4S] cluster. Gln337 is a binding site for FAD. [4Fe-4S] cluster contacts are provided by Cys339 and Cys353. The FAD site is built by Ala383, Glu402, Gln410, Lys420, and Val447.

In the N-terminal section; belongs to the NADH:flavin oxidoreductase/NADH oxidase family. FMN serves as cofactor. The cofactor is FAD. It depends on [4Fe-4S] cluster as a cofactor.

The catalysed reaction is 7alpha,12alpha-dihydroxy-3-oxochol-24-oyl-CoA + NAD(+) = 7alpha,12alpha-dihydroxy-3-oxochol-4-en-24-oyl-CoA + NADH + H(+). The enzyme catalyses 7alpha-hydroxy-3-oxochol-24-oyl-CoA + NAD(+) = 7alpha-hydroxy-3-oxochol-4-en-24-oyl-CoA + NADH + H(+). Its pathway is lipid metabolism; bile acid degradation. In terms of biological role, stereo-specific NAD(H)-dependent 3-oxo-delta4-cholenoic acid oxidoreductase involved in bile acid 7alpha-dehydroxylation. The polypeptide is 3-oxocholoyl-CoA 4-desaturase (Clostridium scindens (strain JCM 10418 / VPI 12708)).